Reading from the N-terminus, the 90-residue chain is Probable Fe(2+)-trafficking protein (90 aa).

This sequence belongs to the Fe(2+)-trafficking protein family.

Could be a mediator in iron transactions between iron acquisition and iron-requiring processes, such as synthesis and/or repair of Fe-S clusters in biosynthetic enzymes. The sequence is that of Probable Fe(2+)-trafficking protein from Pseudomonas entomophila (strain L48).